A 1461-amino-acid polypeptide reads, in one-letter code: Phospholipid-transporting ATPase VB (1461 aa).

The Cytoplasmic portion of the chain corresponds to 1–82; that stretch reads MALSVDSSWH…TTKYTLFTFL (82 aa). Residues 83-104 traverse the membrane as a helical segment; sequence PRNLFEQFHRWANLYFLFLVIL. At 105–110 the chain is on the exoplasmic loop side; it reads NWMPSM. A helical membrane pass occupies residues 111-132; it reads EVFHREITMLPLAIVLFVIMIK. The Cytoplasmic segment spans residues 133–316; the sequence is DGMEDFKRHR…SKIERRMNID (184 aa). The chain crosses the membrane as a helical span at residues 317-338; the sequence is IFFCIGILILMCLIGAVGHSIW. Over 339–368 the chain is Exoplasmic loop; that stretch reads NGTFEEHPPFDVPDANGSFLPSALGGFYMF. A helical membrane pass occupies residues 369–390; the sequence is LTMIILLQVLIPISLYVSIELV. The Cytoplasmic segment spans residues 391–1111; that stretch reads KLGQVFFLSN…GHWCYSRLAR (721 aa). Aspartate 433 functions as the 4-aspartylphosphate intermediate in the catalytic mechanism. ATP is bound by residues aspartate 433, lysine 434, and threonine 435. A Mg(2+)-binding site is contributed by aspartate 433. Residue threonine 435 coordinates Mg(2+). 2 stretches are compositionally biased toward polar residues: residues 496–511 and 530–539; these read MRSQ…SQSA and SQPPVAFSSS. 2 disordered regions span residues 496-541 and 640-687; these read MRSQ…SSIE and TAPS…MWDQ. The ATP site is built by glutamate 724, phenylalanine 766, lysine 790, arginine 835, threonine 915, glycine 916, aspartate 917, arginine 1029, and lysine 1035. Position 1055 (aspartate 1055) interacts with Mg(2+). 2 residues coordinate ATP: asparagine 1058 and aspartate 1059. Residue aspartate 1059 participates in Mg(2+) binding. The helical transmembrane segment at 1112–1132 threads the bilayer; the sequence is MVVYYLYKNVCYVNLLFWYQF. The Exoplasmic loop portion of the chain corresponds to 1133 to 1144; the sequence is FCGFSSSTMIDY. The helical transmembrane segment at 1145-1164 threads the bilayer; the sequence is WQMIFFNLFFTSLPPLVFGV. Over 1165–1194 the chain is Cytoplasmic; it reads LDKDISAETLLALPELYKSGQNSECYNLST. The chain crosses the membrane as a helical span at residues 1195-1216; the sequence is FWISMVDAFYQSLICFFIPYLA. Residues 1217–1223 are Exoplasmic loop-facing; the sequence is YKGSDID. The chain crosses the membrane as a helical span at residues 1224–1246; sequence VFTFGTPINTISLTTILLHQAME. Residues 1247 to 1252 lie on the Cytoplasmic side of the membrane; sequence MKTWTI. Residues 1253–1273 traverse the membrane as a helical segment; that stretch reads FHGVVLLGSFLMYFLVSLLYN. Over 1274 to 1291 the chain is Exoplasmic loop; that stretch reads ATCVICNSPTNPYWVMEG. The helical transmembrane segment at 1292–1316 threads the bilayer; it reads QLSNPTFYLVCFLTPVVALLPRYFF. Residues 1317–1461 are Cytoplasmic-facing; it reads LSLQGTCGKS…HRRSQSSLTI (145 aa). A disordered region spans residues 1346-1397; that stretch reads IQSWRSRQRPAPVPEVARPTHHPVSSITGQDFSASTPKSSNPPKRKHVEESV. A compositionally biased stretch (polar residues) spans 1368–1387; the sequence is PVSSITGQDFSASTPKSSNP.

Belongs to the cation transport ATPase (P-type) (TC 3.A.3) family. Type IV subfamily. In terms of assembly, component of a P4-ATPase flippase complex which consists of a catalytic alpha subunit ATP10B and an accessory beta subunit TMEM30A. It depends on Mg(2+) as a cofactor. Post-translationally, autophosphorylated at the conserved aspartate of the P-type ATPase signature sequence. Expressed in predominantly in brain structures including medulla oblongata, substantia nigra and basal ganglia. Expressed in the gastrointestinal system with highest levels in the small intestine and colon. Also expressed at low levels in testis and thymus.

The protein resides in the late endosome membrane. It is found in the lysosome membrane. The protein localises to the endoplasmic reticulum membrane. The enzyme catalyses ATP + H2O + phospholipidSide 1 = ADP + phosphate + phospholipidSide 2.. The catalysed reaction is a beta-D-glucosyl-(1&lt;-&gt;1')-N-acylsphing-4-enine(out) + ATP + H2O = a beta-D-glucosyl-(1&lt;-&gt;1')-N-acylsphing-4-enine(in) + ADP + phosphate + H(+). Its function is as follows. Catalytic component of a P4-ATPase flippase complex, which catalyzes the hydrolysis of ATP coupled to the transport of glucosylceramide (GlcCer) from the outer to the inner leaflet of lysosome membranes. Plays an important role in the maintenance of lysosome membrane integrity and function in cortical neurons. The chain is Phospholipid-transporting ATPase VB from Homo sapiens (Human).